Reading from the N-terminus, the 623-residue chain is Fanconi anemia group G protein homolog (623 aa).

TPR repeat units follow at residues 251-284, 349-382, 458-491, and 517-550; these read VQVY…GTTC, SQAK…LLGG, SATH…LFRT, and VAAL…CPGN.

In terms of assembly, belongs to the multisubunit FA complex composed of FANCA, FANCB, FANCC, FANCE, FANCF, FANCG, FANCL/PHF9 and FANCM. In complex with FANCF, FANCA and FANCL, but not with FANCC, nor FANCE, interacts with HES1; this interaction may be essential for the stability and nuclear localization of FA core complex proteins. The complex with FANCC and FANCG may also include EIF2AK2 and HSP70. As to expression, highest expression levels in spleen, thymus and testis.

The protein resides in the nucleus. DNA repair protein that may operate in a postreplication repair or a cell cycle checkpoint function. May be implicated in interstrand DNA cross-link repair and in the maintenance of normal chromosome stability. Candidate tumor suppressor gene. The polypeptide is Fanconi anemia group G protein homolog (Fancg) (Mus musculus (Mouse)).